We begin with the raw amino-acid sequence, 414 residues long: 3-oxoacyl-[acyl-carrier-protein] synthase 2 (414 aa).

The region spanning 4-411 (NIRVVITGMG…GHNAVLVFKK (408 aa)) is the Ketosynthase family 3 (KS3) domain. Active-site for beta-ketoacyl synthase activity residues include cysteine 165, histidine 304, and histidine 341.

The protein belongs to the thiolase-like superfamily. Beta-ketoacyl-ACP synthases family.

It catalyses the reaction a fatty acyl-[ACP] + malonyl-[ACP] + H(+) = a 3-oxoacyl-[ACP] + holo-[ACP] + CO2. The enzyme catalyses (9Z)-hexadecenoyl-[ACP] + malonyl-[ACP] + H(+) = 3-oxo-(11Z)-octadecenoyl-[ACP] + holo-[ACP] + CO2. The protein operates within lipid metabolism; fatty acid biosynthesis. Functionally, involved in the type II fatty acid elongation cycle. Catalyzes the elongation of a wide range of acyl-ACP by the addition of two carbons from malonyl-ACP to an acyl acceptor. Can efficiently catalyze the conversion of palmitoleoyl-ACP (cis-hexadec-9-enoyl-ACP) to cis-vaccenoyl-ACP (cis-octadec-11-enoyl-ACP), an essential step in the thermal regulation of fatty acid composition. The sequence is that of 3-oxoacyl-[acyl-carrier-protein] synthase 2 (fabF) from Staphylococcus aureus (strain MRSA252).